Consider the following 309-residue polypeptide: Serpentine receptor class gamma-47 (309 aa).

The next 5 helical transmembrane spans lie at 22–42, 140–160, 190–210, 230–250, and 272–292; these read IVQM…LFLF, FKLY…VLPL, IYSS…IFYI, LITL…ILMA, and ISSD…DVGI.

Belongs to the nematode receptor-like protein srg family.

It localises to the membrane. The chain is Serpentine receptor class gamma-47 (srg-47) from Caenorhabditis elegans.